Reading from the N-terminus, the 155-residue chain is Small ribosomal subunit protein uS7cz/uS7cy (155 aa).

The protein belongs to the universal ribosomal protein uS7 family. In terms of assembly, part of the 30S ribosomal subunit.

It localises to the plastid. The protein resides in the chloroplast. One of the primary rRNA binding proteins, it binds directly to 16S rRNA where it nucleates assembly of the head domain of the 30S subunit. This Vitis vinifera (Grape) protein is Small ribosomal subunit protein uS7cz/uS7cy (rps7-A).